Consider the following 278-residue polypeptide: Endoplasmic reticulum junction formation protein lunapark (278 aa).

Topologically, residues 1-45 (MFSALGKWVRGSRNDKDFVTKYTADLSQITSQIHQLDVALKKSQS) are cytoplasmic. A helical membrane pass occupies residues 46 to 66 (ILSQWQSNLTFYGIALTVLAL). The Lumenal portion of the chain corresponds to 67–77 (SYTYWEYHGYR). Residues 78–98 (PYLVVTALLCIGSLILFKWAL) form a helical membrane-spanning segment. Over 99–278 (TKLYAFYNNN…PSQSEKEKTK (180 aa)) the chain is Cytoplasmic. Residues 107–183 (NNRLRKLAKL…ELEKFKKESH (77 aa)) are a coiled coil. The C4-type; plays a role in ER morphology zinc-finger motif lies at 223 to 247 (CPQCHWKSNCYRLASKPIIFICPHC). Residues 258-278 (EDAIEAKQPAQPSQSEKEKTK) form a disordered region.

The protein belongs to the lunapark family. Interacts with RTN1; this interaction is negatively regulated by SEY1. Interacts with SEY1 and YOP1.

It localises to the endoplasmic reticulum membrane. Its function is as follows. Plays a role in tubular endoplasmic reticulum network formation and maintenance. Works in conjunction with the ER shaping proteins (reticulons RTN1 and RTN2, YOP1), and in antagonism to SEY1 to maintain the network in a dynamic equilibrium. May counterbalance SEY1-directed polygon formation by promoting polygon loss through ring closure. The polypeptide is Endoplasmic reticulum junction formation protein lunapark (LNP1) (Saccharomyces cerevisiae (strain ATCC 204508 / S288c) (Baker's yeast)).